A 423-amino-acid polypeptide reads, in one-letter code: Kynureninase (423 aa).

Pyridoxal 5'-phosphate is bound by residues leucine 105, serine 106, 133–136 (FPSD), aspartate 218, histidine 221, and tyrosine 243. N6-(pyridoxal phosphate)lysine is present on lysine 244. The pyridoxal 5'-phosphate site is built by tryptophan 273 and asparagine 301.

This sequence belongs to the kynureninase family. As to quaternary structure, homodimer. The cofactor is pyridoxal 5'-phosphate.

The catalysed reaction is L-kynurenine + H2O = anthranilate + L-alanine + H(+). It carries out the reaction 3-hydroxy-L-kynurenine + H2O = 3-hydroxyanthranilate + L-alanine + H(+). It participates in amino-acid degradation; L-kynurenine degradation; L-alanine and anthranilate from L-kynurenine: step 1/1. The protein operates within cofactor biosynthesis; NAD(+) biosynthesis; quinolinate from L-kynurenine: step 2/3. Its function is as follows. Catalyzes the cleavage of L-kynurenine (L-Kyn) and L-3-hydroxykynurenine (L-3OHKyn) into anthranilic acid (AA) and 3-hydroxyanthranilic acid (3-OHAA), respectively. This chain is Kynureninase, found in Xanthomonas oryzae pv. oryzae (strain PXO99A).